A 666-amino-acid chain; its full sequence is Probable potassium transport system protein Kup (666 aa).

12 helical membrane passes run 16–36 (GFII…LYTM), 58–78 (ISLI…LIAL), 100–120 (PWLI…GALT), 141–161 (IYQN…VLFG), 165–185 (FGTG…FSFL), 221–241 (IFIL…YSDL), 253–273 (WPFV…WILA), 294–314 (VYLV…LISG), 343–363 (LYIP…VLAF), 373–393 (YGLA…YYLI), 399–419 (PILA…FFLA), and 424–444 (FMHG…VMFI).

This sequence belongs to the HAK/KUP transporter (TC 2.A.72) family.

The protein localises to the cell membrane. The enzyme catalyses K(+)(in) + H(+)(in) = K(+)(out) + H(+)(out). Transport of potassium into the cell. Likely operates as a K(+):H(+) symporter. The chain is Probable potassium transport system protein Kup from Streptococcus pyogenes serotype M4 (strain MGAS10750).